Reading from the N-terminus, the 623-residue chain is uncharacterized protein (623 aa).

Residues 28 to 171 (TSAEVSQRVL…TIATLFAQVQ (144 aa)) enclose the GAF domain. Positions 212–345 (GPVAALFLDL…GGDSVAIFTA (134 aa)) constitute a GGDEF domain. The region spanning 354–609 (RNDIELHLRR…AMRHMLSARR (256 aa)) is the EAL domain.

This is an uncharacterized protein from Mycobacterium tuberculosis (strain CDC 1551 / Oshkosh).